The following is a 272-amino-acid chain: F-actin-capping protein subunit beta (272 aa).

Serine 2 carries the post-translational modification N-acetylserine. The residue at position 2 (serine 2) is a Phosphoserine. Residue lysine 235 is modified to N6-acetyllysine. Valine 263 is subject to Phosphoserine.

Belongs to the F-actin-capping protein beta subunit family. As to quaternary structure, component of the F-actin capping complex, composed of a heterodimer of an alpha and a beta subunit. Subunit of dynactin, a multiprotein complex part of a tripartite complex with dynein and a adapter, such as BICDL1, BICD2 or HOOK3. The dynactin complex is built around ACTR1A/ACTB filament and consists of an actin-related filament composed of a shoulder domain, a pointed end and a barbed end. Its length is defined by its flexible shoulder domain. The soulder is composed of 2 DCTN1 subunits, 4 DCTN2 and 2 DCTN3. The 4 DCNT2 (via N-terminus) bind the ACTR1A filament and act as molecular rulers to determine the length. The pointed end is important for binding dynein-dynactin cargo adapters. Consists of 4 subunits: ACTR10, DCNT4, DCTN5 and DCTN6. The barbed end is composed of a CAPZA1:CAPZB heterodimers, which binds ACTR1A/ACTB filament and dynactin and stabilizes dynactin. Interacts with ARHGAP17. Interaction with RCSD1/CAPZIP. Component of the WASH complex, composed of F-actin-capping protein subunit alpha (CAPZA1, CAPZA2 or CAPZA3), F-actin-capping protein subunit beta (CAPZB), WASH (WASHC1, WASH2P, WASH3P, WASH4P, WASH5P or WASH6P), WASHC2 (WASHC2A or WASHC2C), WASHC3, WASHC4 and WASHC5. Interacts with ACTG1. Directly interacts with CRACD; this interaction decreases binding to actin.

The protein localises to the cytoplasm. It is found in the cytoskeleton. It localises to the myofibril. Its subcellular location is the sarcomere. F-actin-capping proteins bind in a Ca(2+)-independent manner to the fast growing ends of actin filaments (barbed end) thereby blocking the exchange of subunits at these ends. Unlike other capping proteins (such as gelsolin and severin), these proteins do not sever actin filaments. Plays a role in the regulation of cell morphology and cytoskeletal organization. Forms, with CAPZB, the barbed end of the fast growing ends of actin filaments in the dynactin complex and stabilizes dynactin structure. The dynactin multiprotein complex activates the molecular motor dynein for ultra-processive transport along microtubules. This Homo sapiens (Human) protein is F-actin-capping protein subunit beta.